Consider the following 622-residue polypeptide: Probable potassium transport system protein Kup (622 aa).

The next 12 helical transmembrane spans lie at 8 to 28 (LAAL…TSVL), 50 to 70 (VLSI…VVLV), 103 to 123 (LGIG…TPAI), 137 to 157 (PHFG…LFAV), 169 to 189 (FGPV…PHIV), 215 to 235 (FIIL…YADL), 247 to 267 (WFSV…ALLL), 285 to 305 (ALIP…QALI), 337 to 357 (IYIP…VVMF), 366 to 386 (AYGI…FFVI), 393 to 413 (PLAL…AFFG), and 419 to 439 (LLQG…LMMT).

This sequence belongs to the HAK/KUP transporter (TC 2.A.72) family.

It localises to the cell inner membrane. The enzyme catalyses K(+)(in) + H(+)(in) = K(+)(out) + H(+)(out). Transport of potassium into the cell. Likely operates as a K(+):H(+) symporter. The sequence is that of Probable potassium transport system protein Kup from Paracidovorax citrulli (strain AAC00-1) (Acidovorax citrulli).